Here is a 58-residue protein sequence, read N- to C-terminus: Cecropin-A (58 aa).

An N-terminal signal peptide occupies residues 1–23; sequence MNFSKIFIFVVLAVLLLCSQTEA. Leu-57 is modified (leucine amide).

The protein belongs to the cecropin family. Relatively abundant in head, thorax and to a lesser extent in abdominal carcass and anterior midgut.

The protein localises to the secreted. In terms of biological role, antibacterial activity against several Gram-positive and Gram-negative bacteria. Antifungal activity against A.fumigatus, B.cinerea, F.culmorum, F.oxysporum, N.crassa, C.albicans, C.neoformans and S.cerevisiae. This is Cecropin-A (CecA) from Anopheles gambiae (African malaria mosquito).